Consider the following 519-residue polypeptide: Chromobox protein homolog 2 (519 aa).

Residues 12–70 enclose the Chromo domain; the sequence is FAAECILSKRLRKGKLEYLVKWRGWSSKHNSWEPEENILDPRLLLAFQKKEHEKEVQNR. A compositionally biased stretch (basic and acidic residues) spans 60 to 69; sequence KKEHEKEVQN. A disordered region spans residues 60 to 180; the sequence is KKEHEKEVQN…PPEQKAARRP (121 aa). Positions 70–84 are enriched in basic residues; it reads RKRGKRPRGRPRKHT. Residues 75-87 constitute a DNA-binding region (a.T hook); the sequence is RPRGRPRKHTVTS. Positions 103–119 are enriched in low complexity; the sequence is KSKSSSSSSSSTSSSSS. Over residues 129 to 141 the composition is skewed to basic and acidic residues; that stretch reads LDSKRGPRGRETH. Residues Lys147 and Lys154 each participate in a glycyl lysine isopeptide (Lys-Gly) (interchain with G-Cter in SUMO2) cross-link. The Nuclear localization signal motif lies at 164–169; that stretch reads KRGRKP. At Arg248 the chain carries Asymmetric dimethylarginine; alternate. Arg248 carries the omega-N-methylarginine; alternate modification. Disordered stretches follow at residues 295-336 and 367-464; these read QKGG…LAPT and AIPA…TSLP. At Ser303 the chain carries Phosphoserine. Polar residues-rich tracts occupy residues 321-336 and 384-395; these read QRGNHSGSPGAQLAPT and TGANMTNAPTDN. Over residues 453-464 the composition is skewed to low complexity; that stretch reads SSDSDPDSTSLP.

In terms of assembly, component of a PRC1-like complex. The composition of the PRC1 complex may differ between the PRC1 complex in pluripotent embryonic stem cells containing RNF2, CBX7 and PCGF2, and the PRC1 complex in differentiating cells containing RNF2, CBX2, CBX4 and BMI1. Interacts with RING1/RNF2. Interacts (via chromodomain) with histone H3K9Me3 and H3K27me3. May interact with H3C15 and H3C1. In terms of tissue distribution, expressed in embryoid bodies.

Its subcellular location is the nucleus speckle. It localises to the chromosome. In terms of biological role, component of a Polycomb group (PcG) multiprotein PRC1-like complex, a complex class required to maintain the transcriptionally repressive state of many genes, including Hox genes, throughout development. PcG PRC1 complex acts via chromatin remodeling and modification of histones; it mediates monoubiquitination of histone H2A 'Lys-119', rendering chromatin heritably changed in its expressibility. Binds to histone H3 trimethylated at 'Lys-9' (H3K9me3) or at 'Lys-27' (H3K27me3). Plays a role in the lineage differentiation of the germ layers in embryonic development. Involved in sexual development, acting as activator of NR5A1 expression. The chain is Chromobox protein homolog 2 (Cbx2) from Mus musculus (Mouse).